A 294-amino-acid chain; its full sequence is Elongation factor Ts (294 aa).

Residues 81 to 84 (TDFV) form an involved in Mg(2+) ion dislocation from EF-Tu region.

The protein belongs to the EF-Ts family.

The protein resides in the cytoplasm. Its function is as follows. Associates with the EF-Tu.GDP complex and induces the exchange of GDP to GTP. It remains bound to the aminoacyl-tRNA.EF-Tu.GTP complex up to the GTP hydrolysis stage on the ribosome. This is Elongation factor Ts from Hydrogenovibrio crunogenus (strain DSM 25203 / XCL-2) (Thiomicrospira crunogena).